The sequence spans 245 residues: Probable 2-phosphosulfolactate phosphatase (245 aa).

Belongs to the ComB family. Mg(2+) is required as a cofactor.

The catalysed reaction is (2R)-O-phospho-3-sulfolactate + H2O = (2R)-3-sulfolactate + phosphate. The polypeptide is Probable 2-phosphosulfolactate phosphatase (Synechococcus sp. (strain RCC307)).